Reading from the N-terminus, the 188-residue chain is Multiple organellar RNA editing factor 7, mitochondrial (188 aa).

The transit peptide at 1–20 directs the protein to the mitochondrion; sequence MARIIRRPLNLTAAVRFRLS. A disordered region spans residues 169–188; it reads DAKSGVVKKKHRRKRKKKLI. Over residues 174-188 the composition is skewed to basic residues; the sequence is VVKKKHRRKRKKKLI.

The protein belongs to the MORF family. As to quaternary structure, heterodimers with MORF8/RIP1, MORF5/RIP5 and MORF6/RIP6.

It is found in the mitochondrion. Functionally, involved in organellar RNA editing. Required for the processing of few RNA editing sites in mitochondria. The sequence is that of Multiple organellar RNA editing factor 7, mitochondrial from Arabidopsis thaliana (Mouse-ear cress).